The chain runs to 176 residues: Calcineurin subunit B type 2 (176 aa).

A lipid anchor (N-myristoyl glycine) is attached at Gly-2. EF-hand domains are found at residues 18–53 (DEIK…QQNP), 57–85 (RVID…FSVK), 87–122 (DEEQ…MVGN), and 128–163 (QLQQ…MEIH). Residues Asp-31, Asp-33, Ser-35, Ser-37, Glu-42, Asp-63, Asp-65, Asn-67, Glu-69, Glu-74, Asp-100, Asp-102, Asp-104, and Glu-111 each coordinate Ca(2+). A calcineurin A binding region spans residues 131-136 (QLVDKS). Positions 141, 143, 145, 147, and 152 each coordinate Ca(2+).

It belongs to the calcineurin regulatory subunit family. In terms of assembly, forms a complex composed of a calmodulin-dependent catalytic subunit (also known as calcineurin A) and a regulatory Ca(2+)-binding subunit (also known as calcineurin B). There are three catalytic subunits, each encoded by a separate gene (PPP3CA, PPP3CB, and PPP3CC) and two regulatory subunits which are also encoded by separate genes (PPP3R1 and PPP3R2). Interacts with SPATA33 (via PQIIIT motif). As to expression, testis specific.

The protein localises to the mitochondrion. In terms of biological role, regulatory subunit of calcineurin, a calcium-dependent, calmodulin stimulated protein phosphatase. Confers calcium sensitivity. In Rattus norvegicus (Rat), this protein is Calcineurin subunit B type 2 (Ppp3r2).